The sequence spans 66 residues: ATP synthase F(0) complex subunit 8 (66 aa).

Residues 8–24 (TWLTMILSMFLTLFIIF) form a helical membrane-spanning segment. K54 is modified (N6-acetyllysine; alternate). K54 is subject to N6-succinyllysine; alternate. The residue at position 57 (K57) is an N6-acetyllysine.

The protein belongs to the ATPase protein 8 family. In terms of assembly, component of the ATP synthase complex composed at least of ATP5F1A/subunit alpha, ATP5F1B/subunit beta, ATP5MC1/subunit c (homooctomer), MT-ATP6/subunit a, MT-ATP8/subunit 8, ATP5ME/subunit e, ATP5MF/subunit f, ATP5MG/subunit g, ATP5MK/subunit k, ATP5MJ/subunit j, ATP5F1C/subunit gamma, ATP5F1D/subunit delta, ATP5F1E/subunit epsilon, ATP5PF/subunit F6, ATP5PB/subunit b, ATP5PD/subunit d, ATP5PO/subunit OSCP. ATP synthase complex consists of a soluble F(1) head domain (subunits alpha(3) and beta(3)) - the catalytic core - and a membrane F(0) domain - the membrane proton channel (subunits c, a, 8, e, f, g, k and j). These two domains are linked by a central stalk (subunits gamma, delta, and epsilon) rotating inside the F1 region and a stationary peripheral stalk (subunits F6, b, d, and OSCP). Interacts with PRICKLE3.

The protein localises to the mitochondrion membrane. Its function is as follows. Subunit 8, of the mitochondrial membrane ATP synthase complex (F(1)F(0) ATP synthase or Complex V) that produces ATP from ADP in the presence of a proton gradient across the membrane which is generated by electron transport complexes of the respiratory chain. ATP synthase complex consist of a soluble F(1) head domain - the catalytic core - and a membrane F(1) domain - the membrane proton channel. These two domains are linked by a central stalk rotating inside the F(1) region and a stationary peripheral stalk. During catalysis, ATP synthesis in the catalytic domain of F(1) is coupled via a rotary mechanism of the central stalk subunits to proton translocation. In vivo, can only synthesize ATP although its ATP hydrolase activity can be activated artificially in vitro. Part of the complex F(0) domain. In Bos mutus grunniens (Wild yak), this protein is ATP synthase F(0) complex subunit 8.